The chain runs to 387 residues: UPF0400 protein C337.03 (387 aa).

In terms of domain architecture, CID spans 1–133 (MALTPDTVSS…SLQERFNNAE (133 aa)). Residues 177–255 (KSYLEKQSDY…IISNLENKES (79 aa)) are a coiled coil. The segment at 257-387 (TATSTLTDAG…SSAAGLYGDS (131 aa)) is disordered. Positions 283 to 297 (SPPSSSPNSDDAYSP) are enriched in low complexity. Over residues 298 to 323 (QVDSYSPSINSVPYTSNIVENPSEDN) the composition is skewed to polar residues. Over residues 353–365 (NEEESKELPEDSD) the composition is skewed to acidic residues. Low complexity predominate over residues 370–379 (DSSPSSDDSS). Position 372 is a phosphoserine (Ser372).

It belongs to the UPF0400 (RTT103) family.

The chain is UPF0400 protein C337.03 from Schizosaccharomyces pombe (strain 972 / ATCC 24843) (Fission yeast).